A 430-amino-acid chain; its full sequence is MTTQTTPAHIAMFSIAAHGHVNPSLEVIRELVARGHRVTYAIPPVFADKVAATGPRPVLYHSTLPGPDADPEAWGSTLLDNRRTFLNDAIQALPQLADAYADDIPDLVLHDITSYPARVLARRWGVPAVSLSPNLVAWKGYEEEVAEPMWREPRQTERGRAYYARFEAWLKENGITEHPDTFASHPPRSLVLIPKALQPHADRVDEDVYTFVGACQGDRAEEGGWQRPAGAEKVVLVSLGSAFTKQPAFYRECVRAFGNLPGWHLVLQIGRKVTPAELGELPDNVEVHDWVPQLAILRQADLFVTHAGAGGSQEGLATATPMIAVPQAVDQFGNADMLQGLGVARKLATEEATADLLRETALALVDDPEVARRLRRIQAEMAQEGGTRRAADLIEAELPARHERQEPVGDRPNVGDRPAGVRSDRQRSAL.

Positions 385–430 (GGTRRAADLIEAELPARHERQEPVGDRPNVGDRPAGVRSDRQRSAL) are disordered. Positions 386 to 409 (GTRRAADLIEAELPARHERQEPVG) are enriched in basic and acidic residues.

The protein belongs to the UDP-glycosyltransferase family.

Its function is as follows. Specifically inactivates oleandomycin via 2'-O-glycosylation using UDP-glucose. The polypeptide is Oleandomycin glycosyltransferase (oleD) (Streptomyces antibioticus).